A 71-amino-acid chain; its full sequence is Protein translocase subunit SecE (71 aa).

The chain crosses the membrane as a helical span at residues 43-63 (VAGVGILAVGAIGFIIYVLLT).

It belongs to the SecE/SEC61-gamma family. As to quaternary structure, component of the Sec protein translocase complex. Heterotrimer consisting of SecY (alpha), SecG (beta) and SecE (gamma) subunits. The heterotrimers can form oligomers, although 1 heterotrimer is thought to be able to translocate proteins. Interacts with the ribosome. May interact with SecDF, and other proteins may be involved.

Its subcellular location is the cell membrane. In terms of biological role, essential subunit of the Sec protein translocation channel SecYEG. Clamps together the 2 halves of SecY. May contact the channel plug during translocation. This is Protein translocase subunit SecE from Methanosarcina barkeri (strain Fusaro / DSM 804).